The chain runs to 908 residues: Glutamate receptor ionotropic, kainate 2 (908 aa).

A signal peptide spans 1–31; that stretch reads MKIIFPILSNPVFRRTVKLLLCLLWIGYSQG. The Extracellular portion of the chain corresponds to 32–561; the sequence is TTHVLRFGGI…VFSFLNPLSP (530 aa). N-linked (GlcNAc...) asparagine glycosylation is found at Asn-67, Asn-73, Asn-275, Asn-378, Asn-412, Asn-423, and Asn-430. Cysteines 96 and 347 form a disulfide. 3 residues coordinate L-glutamate: Pro-516, Ala-518, and Arg-523. An N-linked (GlcNAc...) asparagine glycan is attached at Asn-546. A helical transmembrane segment spans residues 562–582; the sequence is DIWMYVLLACLGVSCVLFVIA. The Cytoplasmic segment spans residues 583 to 638; that stretch reads RFSPYEWYNPHPCNPDSDVVENNFTLLNSFWFGVGALMRQGSELMPKALSTRIVGG. Residues 639–659 traverse the membrane as a helical segment; that stretch reads IWWFFTLIIISSYTANLAAFL. Topologically, residues 660-819 are extracellular; that stretch reads TVERMESPID…KEASALGVQN (160 aa). L-glutamate contacts are provided by Ala-689, Thr-690, and Glu-738. Cys-750 and Cys-804 are joined by a disulfide. Asn-751 is a glycosylation site (N-linked (GlcNAc...) asparagine). The chain crosses the membrane as a helical span at residues 820 to 840; it reads IGGIFIVLAAGLVLSVFVAVG. Over 841–908 the chain is Cytoplasmic; that stretch reads EFLYKSKKNA…RRLPGKETMA (68 aa). Phosphoserine; by PKC occurs at positions 846 and 868. Lys-886 is covalently cross-linked (Glycyl lysine isopeptide (Lys-Gly) (interchain with G-Cter in SUMO1)).

It belongs to the glutamate-gated ion channel (TC 1.A.10.1) family. GRIK2 subfamily. Homotetramer and heterotetramer with GRIK5. Tetramers may be formed by the dimerization of dimers. Assembles into a kainate-gated homomeric channel that does not bind AMPA. Can form functional heteromeric receptors with GRIK3, GRIK4 and GRIK5. Interacts with NETO2. Interacts with DLG4. Interacts with NETO2. Interacts (via C-terminus) with KLHL17 (via kelch repeats); the interaction targets GRIK2 for degradation via ubiquitin-proteasome pathway. In terms of processing, sumoylation mediates kainate receptor-mediated endocytosis and regulates synaptic transmission. Sumoylation is enhanced by PIAS3 and desumoylated by SENP1. Ubiquitinated. Ubiquitination regulates the GRIK2 levels at the synapse by leading kainate receptor degradation through proteasome. Post-translationally, phosphorylated by PKC at Ser-868 upon agonist activation, this directly enhance sumoylation.

It is found in the cell membrane. The protein localises to the postsynaptic cell membrane. The enzyme catalyses Ca(2+)(in) = Ca(2+)(out). It catalyses the reaction Na(+)(in) = Na(+)(out). Its activity is regulated as follows. Cold receptor activity activated by temperatures between 10-19 degrees Celsius. Functionally, ionotropic glutamate receptor that functions as a cation-permeable ligand-gated ion channel, gated by L-glutamate and the glutamatergic agonist kainic acid. L-glutamate acts as an excitatory neurotransmitter at many synapses in the central nervous system. Binding of the excitatory neurotransmitter L-glutamate induces a conformation change, leading to the opening of the cation channel, and thereby converts the chemical signal to an electrical impulse. The receptor then desensitizes rapidly and enters a transient inactive state, characterized by the presence of bound agonist. Modulates cell surface expression of NETO2. In association with GRIK3, involved in presynaptic facilitation of glutamate release at hippocampal mossy fiber synapses. In terms of biological role, independent of its ionotropic glutamate receptor activity, acts as a thermoreceptor conferring sensitivity to cold temperatures. Functions in dorsal root ganglion neurons. This chain is Glutamate receptor ionotropic, kainate 2 (GRIK2), found in Macaca fascicularis (Crab-eating macaque).